Consider the following 193-residue polypeptide: Leucyl/phenylalanyl-tRNA--protein transferase (193 aa).

The protein belongs to the L/F-transferase family.

It localises to the cytoplasm. The enzyme catalyses N-terminal L-lysyl-[protein] + L-leucyl-tRNA(Leu) = N-terminal L-leucyl-L-lysyl-[protein] + tRNA(Leu) + H(+). It carries out the reaction N-terminal L-arginyl-[protein] + L-leucyl-tRNA(Leu) = N-terminal L-leucyl-L-arginyl-[protein] + tRNA(Leu) + H(+). It catalyses the reaction L-phenylalanyl-tRNA(Phe) + an N-terminal L-alpha-aminoacyl-[protein] = an N-terminal L-phenylalanyl-L-alpha-aminoacyl-[protein] + tRNA(Phe). Functionally, functions in the N-end rule pathway of protein degradation where it conjugates Leu, Phe and, less efficiently, Met from aminoacyl-tRNAs to the N-termini of proteins containing an N-terminal arginine or lysine. In Gloeobacter violaceus (strain ATCC 29082 / PCC 7421), this protein is Leucyl/phenylalanyl-tRNA--protein transferase.